Reading from the N-terminus, the 89-residue chain is Acylphosphatase (89 aa).

The region spanning 3–89 (ALFIKISGRV…QNFTSFDIVP (87 aa)) is the Acylphosphatase-like domain. Catalysis depends on residues Arg-18 and Asn-36.

It belongs to the acylphosphatase family.

It carries out the reaction an acyl phosphate + H2O = a carboxylate + phosphate + H(+). This is Acylphosphatase (acyP) from Pseudothermotoga lettingae (strain ATCC BAA-301 / DSM 14385 / NBRC 107922 / TMO) (Thermotoga lettingae).